The chain runs to 340 residues: Glyceraldehyde-3-phosphate dehydrogenase (340 aa).

NAD(+) is bound by residues 11-12 and Gly-109; that span reads TI. 138-140 contributes to the D-glyceraldehyde 3-phosphate binding site; it reads SCN. Cys-139 functions as the Nucleophile in the catalytic mechanism. Residue Arg-167 participates in NAD(+) binding. 193 to 194 is a binding site for D-glyceraldehyde 3-phosphate; that stretch reads HA. Gln-300 is an NAD(+) binding site.

It belongs to the glyceraldehyde-3-phosphate dehydrogenase family. In terms of assembly, homotetramer.

It localises to the cytoplasm. It catalyses the reaction D-glyceraldehyde 3-phosphate + phosphate + NADP(+) = (2R)-3-phospho-glyceroyl phosphate + NADPH + H(+). The catalysed reaction is D-glyceraldehyde 3-phosphate + phosphate + NAD(+) = (2R)-3-phospho-glyceroyl phosphate + NADH + H(+). It functions in the pathway carbohydrate degradation; glycolysis; pyruvate from D-glyceraldehyde 3-phosphate: step 1/5. The chain is Glyceraldehyde-3-phosphate dehydrogenase from Saccharolobus islandicus (strain L.S.2.15 / Lassen #1) (Sulfolobus islandicus).